We begin with the raw amino-acid sequence, 394 residues long: 3-ketosteroid-9-alpha-monooxygenase, oxygenase component (394 aa).

A Rieske domain is found at 27 to 129 (WHCLGLAKDF…TLDQDGLLFV (103 aa)). Cysteine 68, histidine 70, cysteine 87, and histidine 90 together coordinate [2Fe-2S] cluster. Residues asparagine 175, histidine 181, and histidine 186 each coordinate Fe cation. Tyrosine 245 is a substrate binding site. Fe cation is bound at residue aspartate 305.

As to quaternary structure, homotrimer. The two-component system 3-ketosteroid-9-alpha-monooxygenase is composed of an oxygenase component KshA and a reductase component KshB. [2Fe-2S] cluster serves as cofactor. The cofactor is Fe cation.

The catalysed reaction is androsta-1,4-diene-3,17-dione + 2 reduced [2Fe-2S]-[ferredoxin] + O2 + 2 H(+) = 9alpha-hydroxyandrosta-1,4-diene-3,17-dione + 2 oxidized [2Fe-2S]-[ferredoxin] + H2O. Functionally, may be involved in the degradation of cholic acid, a steroid acid found predominantly in the bile. In vitro, catalyzes the introduction of a 9alpha-hydroxyl moiety into the ring B of 3-ketosteroid substrates such as 1,4-androstadiene-3,17-dione (ADD), 4-androstene-3,17-dione (AD), 4-androstene-17beta-ol-3-one (testosterone), 4-pregnene-3,20-dione (progesterone), 3-oxo-23,24-bisnorcholesta-4-en-22-oate (4-BNC), 23,24-bisnorcholesta-4-ene-22-oate, 3-oxo-23,24-bisnorcholaesta-1,4-dien-22-oate (1,4-BNC), 23,24-bisnorcholesta-1,4-diene-22-oate and 3-oxo-23,24-bisnorcholesta-1,4-dien-22-oyl-coenzyme A thioester (1,4-BNC-CoA). KshA1 has the highest specificity for steroids possessing an isopropionyl side chain at C17. This is 3-ketosteroid-9-alpha-monooxygenase, oxygenase component from Rhodococcus rhodochrous.